The following is a 235-amino-acid chain: Ribonuclease 3 (235 aa).

The region spanning 7–134 is the RNase III domain; the sequence is LKDLQNKIEI…LIASIYLDKG (128 aa). A Mg(2+)-binding site is contributed by Glu-47. Residue Asp-51 is part of the active site. Mg(2+) is bound by residues Asp-120 and Glu-123. Glu-123 is an active-site residue. Residues 161-230 form the DRBM domain; it reads DYKTKLQEII…AKKAIENMEV (70 aa).

The protein belongs to the ribonuclease III family. Homodimer. The cofactor is Mg(2+).

The protein resides in the cytoplasm. The enzyme catalyses Endonucleolytic cleavage to 5'-phosphomonoester.. Functionally, digests double-stranded RNA. Involved in the processing of primary rRNA transcript to yield the immediate precursors to the large and small rRNAs (23S and 16S). Processes some mRNAs, and tRNAs when they are encoded in the rRNA operon. Processes pre-crRNA and tracrRNA of type II CRISPR loci if present in the organism. This is Ribonuclease 3 from Clostridium tetani (strain Massachusetts / E88).